Reading from the N-terminus, the 1202-residue chain is DNA-directed RNA polymerase subunit beta (1202 aa).

Residues leucine 1151–valine 1162 show a composition bias toward acidic residues. The segment at leucine 1151 to asparagine 1202 is disordered. Residues serine 1189–asparagine 1202 show a composition bias toward polar residues.

Belongs to the RNA polymerase beta chain family. The RNAP catalytic core consists of 2 alpha, 1 beta, 1 beta' and 1 omega subunit. When a sigma factor is associated with the core the holoenzyme is formed, which can initiate transcription.

The enzyme catalyses RNA(n) + a ribonucleoside 5'-triphosphate = RNA(n+1) + diphosphate. Functionally, DNA-dependent RNA polymerase catalyzes the transcription of DNA into RNA using the four ribonucleoside triphosphates as substrates. The chain is DNA-directed RNA polymerase subunit beta from Pediococcus pentosaceus (strain ATCC 25745 / CCUG 21536 / LMG 10740 / 183-1w).